Reading from the N-terminus, the 338-residue chain is Tripartite motif-containing protein 44 (338 aa).

Disordered regions lie at residues 1–25 (MASG…EPDE) and 72–162 (ARGD…EFDP). Residues 95-162 (EAGEGIESEE…ETEAESEFDP (68 aa)) are compositionally biased toward acidic residues. Residues 109 to 153 (EEESETEEESEDESEEDSEEEMEDEQESEAEEDNQEEGESEAEGE) adopt a coiled-coil conformation. The segment at 171 to 212 (VAKRKCPDHGLDLSTYCQEDKQLICVLCPVIGAHHGHHLSTL) adopts a B box-type zinc-finger fold. Zn(2+)-binding residues include Cys176, His179, Cys198, and His204. A coiled-coil region spans residues 257-322 (QQEFKKVQKV…QLDTSNESAE (66 aa)). The tract at residues 307-338 (MAQAKEQLDTSNESAEPKAEGDEEEPGGTDED) is disordered. Positions 327 to 338 (GDEEEPGGTDED) are enriched in acidic residues.

As to quaternary structure, interacts (via coiled coil) with TRIM17 (via coiled coil).

Functionally, may play a role in the process of differentiation and maturation of neuronal cells. May regulate the activity of TRIM17. Is a negative regulator of PAX6 expression. The chain is Tripartite motif-containing protein 44 (TRIM44) from Bos taurus (Bovine).